Here is a 50-residue protein sequence, read N- to C-terminus: MLKRKTFLKKKANLQQSSLSRNLRLRRLKHRKQQQFSRHSLQFVVQEICC.

This is an uncharacterized protein from Haemophilus influenzae (strain ATCC 51907 / DSM 11121 / KW20 / Rd).